Here is a 241-residue protein sequence, read N- to C-terminus: Glucosamine-6-phosphate deaminase (241 aa).

The active-site Proton acceptor; for enolization step is Asp67. The For ring-opening step role is filled by Asn136. The active-site Proton acceptor; for ring-opening step is the His138. The active-site For ring-opening step is the Glu143.

Belongs to the glucosamine/galactosamine-6-phosphate isomerase family. NagB subfamily.

The enzyme catalyses alpha-D-glucosamine 6-phosphate + H2O = beta-D-fructose 6-phosphate + NH4(+). It functions in the pathway amino-sugar metabolism; N-acetylneuraminate degradation; D-fructose 6-phosphate from N-acetylneuraminate: step 5/5. Its function is as follows. Catalyzes the reversible isomerization-deamination of glucosamine 6-phosphate (GlcN6P) to form fructose 6-phosphate (Fru6P) and ammonium ion. This Halothermothrix orenii (strain H 168 / OCM 544 / DSM 9562) protein is Glucosamine-6-phosphate deaminase.